We begin with the raw amino-acid sequence, 121 residues long: Small ribosomal subunit protein eS24 (121 aa).

The protein belongs to the eukaryotic ribosomal protein eS24 family.

The chain is Small ribosomal subunit protein eS24 from Pyrobaculum arsenaticum (strain DSM 13514 / JCM 11321 / PZ6).